The sequence spans 349 residues: Probable tRNA pseudouridine synthase B (349 aa).

Residue Asp-41 is the Nucleophile of the active site. The PUA domain maps to 207-279; sequence YPKVIVKETA…KVIDIDNVLI (73 aa). Residues 300–309 are compositionally biased toward basic and acidic residues; it reads IPVQKPERKL. The interval 300–349 is disordered; sequence IPVQKPERKLHGNLQGSQEWKDTGNRGNPKRGGTGSKGFSSGFRKRKAKR.

Belongs to the pseudouridine synthase TruB family. Type 2 subfamily.

It carries out the reaction uridine(55) in tRNA = pseudouridine(55) in tRNA. Functionally, could be responsible for synthesis of pseudouridine from uracil-55 in the psi GC loop of transfer RNAs. This is Probable tRNA pseudouridine synthase B from Picrophilus torridus (strain ATCC 700027 / DSM 9790 / JCM 10055 / NBRC 100828 / KAW 2/3).